The sequence spans 296 residues: Glycine--tRNA ligase alpha subunit (296 aa).

This sequence belongs to the class-II aminoacyl-tRNA synthetase family. In terms of assembly, tetramer of two alpha and two beta subunits.

The protein localises to the cytoplasm. The catalysed reaction is tRNA(Gly) + glycine + ATP = glycyl-tRNA(Gly) + AMP + diphosphate. In Francisella tularensis subsp. holarctica (strain FTNF002-00 / FTA), this protein is Glycine--tRNA ligase alpha subunit.